We begin with the raw amino-acid sequence, 317 residues long: Ubiquinone biosynthesis protein COQ9-A, mitochondrial (317 aa).

A mitochondrion-targeting transit peptide spans 1 to 46 (MAASVTRVLKGAGGRQLLLMVARRRPVLMQPFLLMPRKFWVSSALR). The disordered stretch occupies residues 50-97 (QRQPPFSASSTHAETQGHAEEQYQQKQPPPRYTDQAGEESEGYESEEQ). The segment covering 53-63 (PPFSASSTHAE) has biased composition (polar residues). The segment covering 85–96 (AGEESEGYESEE) has biased composition (acidic residues). Arginine 243 contacts a 1,2-diacylglycero-3-phosphoethanolamine.

It belongs to the COQ9 family. In terms of assembly, homodimer. Heterodimer; two heterodimers of COQ7:COQ9 come together on the same side of the lipid pseudo-bilayer and form a curved tetramer with a hydrophobic surface suitable for membrane interaction. These two tetramers assemble into a soluble octamer with a pseudo-bilayer of lipids captured within. Interacts with COQ7; this interaction allows ubiquinone (CoQ) isoprene intermediates presentation to COQ7 and facilitates the COQ7-mediated hydroxylase step.

The protein localises to the mitochondrion. It functions in the pathway cofactor biosynthesis; ubiquinone biosynthesis. Functionally, membrane-associated protein that warps the membrane surface to access and bind aromatic isoprenes with high specificity, including ubiquinone (CoQ) isoprene intermediates and presents them directly to COQ7, therefore facilitating the COQ7-mediated hydroxylase step. Participates in the biosynthesis of coenzyme Q, also named ubiquinone, an essential lipid-soluble electron transporter for aerobic cellular respiration. The sequence is that of Ubiquinone biosynthesis protein COQ9-A, mitochondrial (coq9-a) from Xenopus laevis (African clawed frog).